Consider the following 144-residue polypeptide: D-aminoacyl-tRNA deacylase (144 aa).

The Gly-cisPro motif, important for rejection of L-amino acids signature appears at 136 to 137 (GP).

The protein belongs to the DTD family. In terms of assembly, homodimer.

The protein resides in the cytoplasm. The enzyme catalyses glycyl-tRNA(Ala) + H2O = tRNA(Ala) + glycine + H(+). The catalysed reaction is a D-aminoacyl-tRNA + H2O = a tRNA + a D-alpha-amino acid + H(+). In terms of biological role, an aminoacyl-tRNA editing enzyme that deacylates mischarged D-aminoacyl-tRNAs. Also deacylates mischarged glycyl-tRNA(Ala), protecting cells against glycine mischarging by AlaRS. Acts via tRNA-based rather than protein-based catalysis; rejects L-amino acids rather than detecting D-amino acids in the active site. By recycling D-aminoacyl-tRNA to D-amino acids and free tRNA molecules, this enzyme counteracts the toxicity associated with the formation of D-aminoacyl-tRNA entities in vivo and helps enforce protein L-homochirality. This chain is D-aminoacyl-tRNA deacylase, found in Haemophilus influenzae (strain PittGG).